A 570-amino-acid polypeptide reads, in one-letter code: Formate--tetrahydrofolate ligase (570 aa).

65 to 72 is an ATP binding site; that stretch reads TPFGEGKT.

Belongs to the formate--tetrahydrofolate ligase family.

It catalyses the reaction (6S)-5,6,7,8-tetrahydrofolate + formate + ATP = (6R)-10-formyltetrahydrofolate + ADP + phosphate. It participates in one-carbon metabolism; tetrahydrofolate interconversion. The protein is Formate--tetrahydrofolate ligase of Shewanella sediminis (strain HAW-EB3).